A 693-amino-acid polypeptide reads, in one-letter code: F-box protein MAX2 (693 aa).

One can recognise an F-box domain in the interval 3–50 (STTLSDLPDVILSTISSLVSDSRARNSLSLVSHKFLALERSTRSHLTI). 14 LRR repeats span residues 9–34 (LPDVILSTISSLVSDSRARNSLSLVS), 49–74 (TIRGNARDLSLVPDCFRSISHLDLSF), 75–100 (LSPWGHTLLASLPIDHQNLLALRLKF), 110–135 (VYTRSPSSLELLLPQWPRIRHIKLLR), 141–167 (SQIPTGGDFVPIFEHCGGFLESLDLSN), 168–196 (FYHWTEDLPPVLLRYADVAARLTRLDLLT), 200–225 (TEGYKSSEIVSITKSCPNLKTFRVAC), 232–257 (FEFVGDETLSAVATSSPKLTLLHMVD), 274–299 (DSAVTAGTLIEVFSGLPNLEELVLDV), 302–327 (DVKHSGVALEALNSKCKKLRVLKLGQ), 332–356 (CSATEWRRLDGVALCGGLQSLSIKN), 357–382 (SGDLTDMGLVAIGRGCCKLTTFEIQG), 383–409 (CENVTVDGLRTMVSLRSKTLTDVRISC), and 410–436 (CKNLDTAASLKAIEPICDRIKRLHIDC). Residues 445-465 (EVEGRVETSEADHEEEDDGYE) form a disordered region. 4 LRR repeats span residues 480–505 (CSTSDVNGFCSEDRVWEKLEYLSLWI), 508–532 (GEFLTPLPMTGLDDCPNLEEIRIKI), 541–565 (RPAEPEFGLSCLALYPKLSKMQLDC), and 608–637 (DRDVNQRSLSLPGAGLLQECLTLRKLFIHG).

Part of a SCF (SKP1-cullin-F-box) protein ligase complex. Interacts with SKP1A/ASK1. Interacts with CUL1. Interacts with SMXL6, SMXL7 and SMXL8. Interacts with D14. Forms a complex with D14 and SKP1A/ASK1 in presence of strigolactone. Expressed in the vasculature of growing leaves and roots, rosette axillary bud, flowers, siliques, funiculi and stems.

Its subcellular location is the nucleus. The protein operates within protein modification; protein ubiquitination. Functionally, component of SCF(ASK-cullin-F-box) E3 ubiquitin ligase complexes, which may mediate the ubiquitination and subsequent proteasomal degradation of target proteins. Promotes the senescence. Is necessary for responses to strigolactones and karrikins. Contributes to the selective repression of axillary shoots and moderates the branching by regulating negatively the auxin transport in primary stems, in an AXR1-independent manner. Required for the progression of leaf senescence mediated by methyl jasmonate. Required at each node to suppress axillary bud growth. The chain is F-box protein MAX2 from Arabidopsis thaliana (Mouse-ear cress).